We begin with the raw amino-acid sequence, 356 residues long: UDP-N-acetylglucosamine--N-acetylmuramyl-(pentapeptide) pyrophosphoryl-undecaprenol N-acetylglucosamine transferase (356 aa).

UDP-N-acetyl-alpha-D-glucosamine-binding residues include R166, S196, and Q290.

It belongs to the glycosyltransferase 28 family. MurG subfamily.

It localises to the cell membrane. It catalyses the reaction Mur2Ac(oyl-L-Ala-gamma-D-Glu-L-Lys-D-Ala-D-Ala)-di-trans,octa-cis-undecaprenyl diphosphate + UDP-N-acetyl-alpha-D-glucosamine = beta-D-GlcNAc-(1-&gt;4)-Mur2Ac(oyl-L-Ala-gamma-D-Glu-L-Lys-D-Ala-D-Ala)-di-trans,octa-cis-undecaprenyl diphosphate + UDP + H(+). It participates in cell wall biogenesis; peptidoglycan biosynthesis. In terms of biological role, cell wall formation. Catalyzes the transfer of a GlcNAc subunit on undecaprenyl-pyrophosphoryl-MurNAc-pentapeptide (lipid intermediate I) to form undecaprenyl-pyrophosphoryl-MurNAc-(pentapeptide)GlcNAc (lipid intermediate II). In Staphylococcus aureus (strain MW2), this protein is UDP-N-acetylglucosamine--N-acetylmuramyl-(pentapeptide) pyrophosphoryl-undecaprenol N-acetylglucosamine transferase.